Reading from the N-terminus, the 177-residue chain is Preprotein translocase subunit SECE1 (177 aa).

Residues 1 to 38 (MSLTAQFSPPVTGITRSLRDTKPSLSNLRVFPVYTEIR) constitute a chloroplast transit peptide. The interval 60–87 (RDTAGSESESEATPSPAEESGSGEDKEV) is disordered. Over residues 64 to 79 (GSESESEATPSPAEES) the composition is skewed to low complexity. A helical transmembrane segment spans residues 140 to 160 (VVLGVIAGSSVVLLTVNFLLA).

Belongs to the SecE/SEC61-gamma family. Part of the Sec protein translocation apparatus. Interacts with SCY1 and ALB3.

It is found in the plastid. It localises to the chloroplast thylakoid membrane. Functionally, involved in the import/insertion pathway in the thylakoids. The signal recognition particle is not involved in the insertion of SECE1 in the thylakoid membrane. The polypeptide is Preprotein translocase subunit SECE1 (SECE1) (Arabidopsis thaliana (Mouse-ear cress)).